Reading from the N-terminus, the 436-residue chain is ATP-dependent protease ATPase subunit HslU (436 aa).

ATP contacts are provided by residues V18, 60-65 (GVGKTE), D249, E314, and R386.

The protein belongs to the ClpX chaperone family. HslU subfamily. In terms of assembly, a double ring-shaped homohexamer of HslV is capped on each side by a ring-shaped HslU homohexamer. The assembly of the HslU/HslV complex is dependent on binding of ATP.

Its subcellular location is the cytoplasm. Functionally, ATPase subunit of a proteasome-like degradation complex; this subunit has chaperone activity. The binding of ATP and its subsequent hydrolysis by HslU are essential for unfolding of protein substrates subsequently hydrolyzed by HslV. HslU recognizes the N-terminal part of its protein substrates and unfolds these before they are guided to HslV for hydrolysis. The sequence is that of ATP-dependent protease ATPase subunit HslU from Rhizobium rhizogenes (strain K84 / ATCC BAA-868) (Agrobacterium radiobacter).